Here is a 201-residue protein sequence, read N- to C-terminus: Holliday junction resolvase RecU (201 aa).

Positions 85, 87, 100, and 119 each coordinate Mg(2+).

The protein belongs to the RecU family. Mg(2+) serves as cofactor.

It localises to the cytoplasm. It catalyses the reaction Endonucleolytic cleavage at a junction such as a reciprocal single-stranded crossover between two homologous DNA duplexes (Holliday junction).. In terms of biological role, endonuclease that resolves Holliday junction intermediates in genetic recombination. Cleaves mobile four-strand junctions by introducing symmetrical nicks in paired strands. Promotes annealing of linear ssDNA with homologous dsDNA. Required for DNA repair, homologous recombination and chromosome segregation. The protein is Holliday junction resolvase RecU of Geobacillus sp. (strain WCH70).